Consider the following 265-residue polypeptide: Glutamate racemase (265 aa).

Substrate contacts are provided by residues aspartate 12–serine 13 and tyrosine 44–glycine 45. Residue cysteine 75 is the Proton donor/acceptor of the active site. Asparagine 76–threonine 77 contacts substrate. Cysteine 183 serves as the catalytic Proton donor/acceptor. Threonine 184–histidine 185 contributes to the substrate binding site.

The protein belongs to the aspartate/glutamate racemases family.

It catalyses the reaction L-glutamate = D-glutamate. It functions in the pathway cell wall biogenesis; peptidoglycan biosynthesis. Its function is as follows. Provides the (R)-glutamate required for cell wall biosynthesis. This Carboxydothermus hydrogenoformans (strain ATCC BAA-161 / DSM 6008 / Z-2901) protein is Glutamate racemase.